The following is a 560-amino-acid chain: RNA polymerase-associated protein C651.09c (560 aa).

Disordered stretches follow at residues 15-74 (DDSD…KNPY) and 128-207 (YMAQ…KVEQ). Positions 148 to 171 (GKRDKLTELKKRRQERSARSVSER) are enriched in basic and acidic residues. Residues 180–195 (DYEEQNESEKSEEEEG) are compositionally biased toward acidic residues. Phosphoserine is present on Ser-197. Residues 214–345 (SANLYDLNAI…KLNDLRDMSK (132 aa)) form the Plus3 domain. Residues 387–456 (AGNAELVKEI…RRRLSAAATA (70 aa)) adopt a coiled-coil conformation. Over residues 440 to 449 (EQRMNEERRR) the composition is skewed to basic and acidic residues. The disordered stretch occupies residues 440–486 (EQRMNEERRRLSAAATATPMSAPTSVLTGTSPQPSPSLSTSIMSTPK). Over residues 451 to 480 (SAAATATPMSAPTSVLTGTSPQPSPSLSTS) the composition is skewed to low complexity. Phosphoserine occurs at positions 502 and 506.

In terms of assembly, component of the PAF1 complex.

The protein localises to the nucleus. It is found in the nucleoplasm. Its function is as follows. The PAF1 complex is a multifunctional complex. Involved in transcription initiation via genetic interactions with TATA-binding proteins. Involved in elongation. Also has a role in transcription-coupled histone modification. Important for TATA site selection by TBP. Directly or indirectly regulates the DNA-binding properties of the TATA box-binding protein, and the relative activities of different TATA elements. This chain is RNA polymerase-associated protein C651.09c, found in Schizosaccharomyces pombe (strain 972 / ATCC 24843) (Fission yeast).